The chain runs to 599 residues: MTTQAPPSNLLPLNPEQLARLQAATTDFTPTQLAWVSGYFWGVLNQQSGAAVAAPAPAAEVPTITLISASQTGNARRVAEALRDDLLAAKLNVKLVNAGDYKFKQIAAEKLLVVVTSTQGEGEPPEEAVALHKFLFSKKAPKLDGTAFAVFGLGDTSYEFFCQSGKDFDNKLAELGAERLLDRVDADVEYQAAAAEWRARVVEALKARAPVAAPAQLATSGAVNDIHTSPYTKEAPLTATLSVNQKITGRNSEKDVRHIEIDLGDSGLRYQPGDALGVWYQNDPQLVKELVELLWLKGDEPVTVEGKTLPLSEALQWHFELTVNTATIVENYATLTRSESLLPLVGDKAQLQQYAAATPIVDMVRFSPAQLDAEALIGLLRPLTPRLYSIASSQAEVESEVHVTVGVVRYEIEGRARAGGASSFLADRVEEDGEVRVFIEHNDNFRLPANPETPVIMIGPGTGIAPFRAFMQQRAADGAQGKNWLFFGNPHFTEDFLYQVEWQSYVKEGLLTRIDLAWSRDQQQKIYVQDKLREQGAELWRWINDGAHIYVCGDANRMAKDVENTLLEVIAEYGAMDAEAADEFLSELRVERRYQRDVY.

Residues 64-202 form the Flavodoxin-like domain; that stretch reads ITLISASQTG…AAAEWRARVV (139 aa). Residues 70-75, 117-120, and 153-162 each bind FMN; these read SQTGNA, STQG, and LGDTSYEFFC. Residues 234–448 enclose the FAD-binding FR-type domain; the sequence is EAPLTATLSV…IEHNDNFRLP (215 aa). FAD-binding positions include threonine 322, alanine 356, 386 to 389, 404 to 406, tyrosine 410, and 419 to 422; these read RLYS, TVG, and GGAS. NADP(+)-binding positions include 519–520, 525–529, and aspartate 561; these read SR and KIYVQ. Tyrosine 599 serves as a coordination point for FAD.

Belongs to the NADPH-dependent sulphite reductase flavoprotein subunit CysJ family. The protein in the N-terminal section; belongs to the flavodoxin family. It in the C-terminal section; belongs to the flavoprotein pyridine nucleotide cytochrome reductase family. Alpha(8)-beta(8). The alpha component is a flavoprotein, the beta component is a hemoprotein. The cofactor is FAD. FMN is required as a cofactor.

It catalyses the reaction hydrogen sulfide + 3 NADP(+) + 3 H2O = sulfite + 3 NADPH + 4 H(+). Its pathway is sulfur metabolism; hydrogen sulfide biosynthesis; hydrogen sulfide from sulfite (NADPH route): step 1/1. Its function is as follows. Component of the sulfite reductase complex that catalyzes the 6-electron reduction of sulfite to sulfide. This is one of several activities required for the biosynthesis of L-cysteine from sulfate. The flavoprotein component catalyzes the electron flow from NADPH -&gt; FAD -&gt; FMN to the hemoprotein component. This is Sulfite reductase [NADPH] flavoprotein alpha-component from Klebsiella pneumoniae subsp. pneumoniae (strain ATCC 700721 / MGH 78578).